The chain runs to 199 residues: Thymidylate kinase (199 aa).

7-14 (GTEGVGKT) provides a ligand contact to ATP.

It belongs to the thymidylate kinase family.

The enzyme catalyses dTMP + ATP = dTDP + ADP. Functionally, phosphorylation of dTMP to form dTDP in both de novo and salvage pathways of dTTP synthesis. The chain is Thymidylate kinase from Acinetobacter baumannii (strain ATCC 17978 / DSM 105126 / CIP 53.77 / LMG 1025 / NCDC KC755 / 5377).